The primary structure comprises 594 residues: ATP-dependent zinc metalloprotease FtsH 1 (594 aa).

Residues 1-2 lie on the Cytoplasmic side of the membrane; the sequence is MR. The helical transmembrane segment at 3–23 threads the bilayer; the sequence is WWAGAALLLAALLFGRPAAAM. Over 24–92 the chain is Extracellular; that stretch reads EAQPVAYSEF…RVEFVRPADP (69 aa). Residues 93 to 113 traverse the membrane as a helical segment; the sequence is IAFRTLLRFIPPLLILGAILW. Residues 114 to 594 lie on the Cytoplasmic side of the membrane; it reads FTRRTAGGSG…ANSRGDEGNQ (481 aa). Residue 186–193 participates in ATP binding; it reads GPPGTGKT. H408 contacts Zn(2+). E409 is an active-site residue. H412 and D485 together coordinate Zn(2+).

In the central section; belongs to the AAA ATPase family. It in the C-terminal section; belongs to the peptidase M41 family. As to quaternary structure, homohexamer. Zn(2+) serves as cofactor.

It is found in the cell membrane. In terms of biological role, acts as a processive, ATP-dependent zinc metallopeptidase for both cytoplasmic and membrane proteins. Plays a role in the quality control of integral membrane proteins. The protein is ATP-dependent zinc metalloprotease FtsH 1 of Symbiobacterium thermophilum (strain DSM 24528 / JCM 14929 / IAM 14863 / T).